The sequence spans 243 residues: 2-C-methyl-D-erythritol 4-phosphate cytidylyltransferase (243 aa).

The protein belongs to the IspD/TarI cytidylyltransferase family. IspD subfamily.

The catalysed reaction is 2-C-methyl-D-erythritol 4-phosphate + CTP + H(+) = 4-CDP-2-C-methyl-D-erythritol + diphosphate. Its pathway is isoprenoid biosynthesis; isopentenyl diphosphate biosynthesis via DXP pathway; isopentenyl diphosphate from 1-deoxy-D-xylulose 5-phosphate: step 2/6. In terms of biological role, catalyzes the formation of 4-diphosphocytidyl-2-C-methyl-D-erythritol from CTP and 2-C-methyl-D-erythritol 4-phosphate (MEP). This Pelodictyon phaeoclathratiforme (strain DSM 5477 / BU-1) protein is 2-C-methyl-D-erythritol 4-phosphate cytidylyltransferase.